Here is a 224-residue protein sequence, read N- to C-terminus: MTKKICIAIDGPAAAGKSTVAKIVAKKLRFVYIDTGAMYRAVTYIALKNNIAYEDEKAIATLLQKTVIRFEPGEVQQVFVGEENVTEVIRSLEVTNHVSIVAAHPSIREALQERQQVFATEGGIVMDGRDIGTAVLPNAELKIFLLASVEERAERRYKENMAKGFAGDLGQLKKEIEERDHLDYTRTHSPLKKADDAIEVDTTSMSIDEVANKILSLAELKINN.

Residue G11–T19 coordinates ATP.

Belongs to the cytidylate kinase family. Type 1 subfamily.

The protein localises to the cytoplasm. It catalyses the reaction CMP + ATP = CDP + ADP. The enzyme catalyses dCMP + ATP = dCDP + ADP. The polypeptide is Cytidylate kinase (Listeria monocytogenes serotype 4b (strain CLIP80459)).